We begin with the raw amino-acid sequence, 310 residues long: Tagatose-6-phosphate kinase (310 aa).

Belongs to the carbohydrate kinase PfkB family. LacC subfamily.

It catalyses the reaction D-tagatofuranose 6-phosphate + ATP = D-tagatofuranose 1,6-bisphosphate + ADP + H(+). It functions in the pathway carbohydrate metabolism; D-tagatose 6-phosphate degradation; D-glyceraldehyde 3-phosphate and glycerone phosphate from D-tagatose 6-phosphate: step 1/2. In Streptococcus agalactiae serotype V (strain ATCC BAA-611 / 2603 V/R), this protein is Tagatose-6-phosphate kinase.